A 347-amino-acid chain; its full sequence is Biotin synthase (347 aa).

The Radical SAM core domain maps to 40–258; the sequence is AQVQVSTLLS…IAVARIAMPR (219 aa). Residues C55, C59, and C62 each contribute to the [4Fe-4S] cluster site. Residues C99, C130, C190, and R262 each contribute to the [2Fe-2S] cluster site.

It belongs to the radical SAM superfamily. Biotin synthase family. Homodimer. [4Fe-4S] cluster is required as a cofactor. It depends on [2Fe-2S] cluster as a cofactor.

The enzyme catalyses (4R,5S)-dethiobiotin + (sulfur carrier)-SH + 2 reduced [2Fe-2S]-[ferredoxin] + 2 S-adenosyl-L-methionine = (sulfur carrier)-H + biotin + 2 5'-deoxyadenosine + 2 L-methionine + 2 oxidized [2Fe-2S]-[ferredoxin]. The protein operates within cofactor biosynthesis; biotin biosynthesis; biotin from 7,8-diaminononanoate: step 2/2. Catalyzes the conversion of dethiobiotin (DTB) to biotin by the insertion of a sulfur atom into dethiobiotin via a radical-based mechanism. The protein is Biotin synthase of Stenotrophomonas maltophilia (strain K279a).